The following is a 483-amino-acid chain: Probable L-xylulose kinase (483 aa).

This sequence belongs to the FGGY kinase family. Homodimer.

It catalyses the reaction L-xylulose + ATP = L-xylulose 5-phosphate + ADP + H(+). The polypeptide is Probable L-xylulose kinase (lyx) (Pasteurella multocida (strain Pm70)).